The sequence spans 588 residues: Tripartite motif-containing protein 29 (588 aa).

The tract at residues 1 to 66 (MEAADASRSN…GSALKPGEGR (66 aa)) is disordered. Serine 21, serine 28, serine 58, and serine 104 each carry phosphoserine. A Phosphotyrosine modification is found at tyrosine 106. A B box-type zinc finger spans residues 220-260 (FEARKCPVHGKTMELFCQTDQTCICYLCMFQEHKNHSTVTV). Zn(2+) contacts are provided by cysteine 225, histidine 228, cysteine 247, and histidine 252. Residues 259–352 (TVEEAKAEKE…VKVIMDALDE (94 aa)) adopt a coiled-coil conformation. Threonine 476 bears the Phosphothreonine mark. Serine 489 carries the post-translational modification Phosphoserine.

Interacts with VIM and HINT1. Interacts with IKBKG/NEMO. Interacts with STING1. Constitutively phosphorylated by PKC on serine/threonine in A431 cells. Expressed in placenta, prostate and thymus.

The protein localises to the cytoplasm. The protein resides in the lysosome. Plays a crucial role in the regulation of macrophage activation in response to viral or bacterial infections within the respiratory tract. Mechanistically, TRIM29 interacts with IKBKG/NEMO in the lysosome where it induces its 'Lys-48' ubiquitination and subsequent degradation. In turn, the expression of type I interferons and the production of pro-inflammatory cytokines are inhibited. Additionally, induces the 'Lys-48' ubiquitination of STING1 in a similar way, leading to its degradation. This chain is Tripartite motif-containing protein 29 (TRIM29), found in Homo sapiens (Human).